A 465-amino-acid chain; its full sequence is GTPase Der (465 aa).

EngA-type G domains are found at residues proline 3–serine 167 and isoleucine 179–leucine 352. GTP-binding positions include glycine 9–serine 16, aspartate 57–methionine 61, asparagine 119–aspartate 122, glycine 185–serine 192, aspartate 232–leucine 236, and asparagine 297–aspartate 300. In terms of domain architecture, KH-like spans arginine 353–aspartate 437.

Belongs to the TRAFAC class TrmE-Era-EngA-EngB-Septin-like GTPase superfamily. EngA (Der) GTPase family. As to quaternary structure, associates with the 50S ribosomal subunit.

Its function is as follows. GTPase that plays an essential role in the late steps of ribosome biogenesis. The protein is GTPase Der of Xylella fastidiosa (strain M23).